Consider the following 112-residue polypeptide: Small ribosomal subunit protein uS17 (112 aa).

The protein belongs to the universal ribosomal protein uS17 family. Part of the 30S ribosomal subunit.

In terms of biological role, one of the primary rRNA binding proteins, it binds specifically to the 5'-end of 16S ribosomal RNA. The protein is Small ribosomal subunit protein uS17 of Thermotoga neapolitana (strain ATCC 49049 / DSM 4359 / NBRC 107923 / NS-E).